A 370-amino-acid chain; its full sequence is MTARNLFLLPGDGIGPEAMGEVRKIIAYMNEAMNAGFVTDEGLVGGCAYDAHGAAISEADMQKALAADAVLFGAVGGPKWDSVPYEVRPEAGLLRLRKDLQLFANLRPAICYPALAAASSLKPELVEGLDILIIRELTGGVYFGEPKEIIDLGNGQKRGIDTQVYDTYEIERIAGVAFEMARTRQNRVCSMEKRNVMKSGVLWNQVVTETHKAKYSDVQLEHMLADAGGMQLVRQPKQFDVIVTDNLFGDMLSDVAAMLTGSLGMLPSASLGAPDGKTGKRKALYEPVHGSAPDIAGKGIANPIAMIASFAMCLRYSFNLVKEADDLEKAIANVLDKGIRTGDIMADGARQVGTVEMGDAILAEFKTLSA.

77-90 is a binding site for NAD(+); it reads GPKWDSVPYEVRPE. Substrate-binding residues include Arg97, Arg107, Arg135, and Asp226. The Mg(2+) site is built by Asp226, Asp250, and Asp254. NAD(+) is bound at residue 290–302; sequence GSAPDIAGKGIAN.

Belongs to the isocitrate and isopropylmalate dehydrogenases family. LeuB type 1 subfamily. Homodimer. Requires Mg(2+) as cofactor. The cofactor is Mn(2+).

Its subcellular location is the cytoplasm. The enzyme catalyses (2R,3S)-3-isopropylmalate + NAD(+) = 4-methyl-2-oxopentanoate + CO2 + NADH. It participates in amino-acid biosynthesis; L-leucine biosynthesis; L-leucine from 3-methyl-2-oxobutanoate: step 3/4. Catalyzes the oxidation of 3-carboxy-2-hydroxy-4-methylpentanoate (3-isopropylmalate) to 3-carboxy-4-methyl-2-oxopentanoate. The product decarboxylates to 4-methyl-2 oxopentanoate. This chain is 3-isopropylmalate dehydrogenase, found in Rhizobium johnstonii (strain DSM 114642 / LMG 32736 / 3841) (Rhizobium leguminosarum bv. viciae).